Here is a 1127-residue protein sequence, read N- to C-terminus: Structural protein MDM1 (1127 aa).

Residues 85–273 enclose the PXA domain; that stretch reads NAQIGKELES…WNLRIVSLSQ (189 aa). 3 positions are modified to phosphoserine: S670, S673, and S692. A coiled-coil region spans residues 705–762; sequence SNNFRDNIASLTISIDQIEKELELLRHLILKADLTNNQMQLKILKKSQRTLLKELEMK. The PX domain maps to 782–905; that stretch reads TKIYIRSYFS…RFLTDPTPFK (124 aa).

This sequence belongs to the sorting nexin family.

It is found in the cytoplasm. Essential for mitotic growth. Mediates organelle inheritance. The protein is Structural protein MDM1 (MDM1) of Saccharomyces cerevisiae (strain ATCC 204508 / S288c) (Baker's yeast).